A 203-amino-acid polypeptide reads, in one-letter code: Synaptosomal-associated protein 25-B (203 aa).

Residues 1-11 (MADEADMRNEL) are compositionally biased toward basic and acidic residues. The interval 1–25 (MADEADMRNELTDMQARADQLGDES) is disordered. T-SNARE coiled-coil homology domains follow at residues 19–81 (DQLG…LTDL) and 137–199 (DARE…ATKM).

The protein belongs to the SNAP-25 family.

It localises to the synapse. Its subcellular location is the synaptosome. It is found in the cell membrane. Its function is as follows. May play an important role in the synaptic function of specific neuronal systems. Associates with proteins involved in vesicle docking and membrane fusion. In Carassius auratus (Goldfish), this protein is Synaptosomal-associated protein 25-B (snap25b).